We begin with the raw amino-acid sequence, 185 residues long: Ribosome-recycling factor (185 aa).

It belongs to the RRF family.

Its subcellular location is the cytoplasm. Its function is as follows. Responsible for the release of ribosomes from messenger RNA at the termination of protein biosynthesis. May increase the efficiency of translation by recycling ribosomes from one round of translation to another. In Streptococcus pyogenes serotype M1, this protein is Ribosome-recycling factor.